Here is a 293-residue protein sequence, read N- to C-terminus: Protease HtpX (293 aa).

2 consecutive transmembrane segments (helical) span residues 4–24 (IALFLITNLAVMLVFGLVLSL) and 34–54 (GLMIMAGLFGFGGAFVSLLMS). Residue histidine 139 participates in Zn(2+) binding. The active site involves glutamate 140. A Zn(2+)-binding site is contributed by histidine 143. The next 2 membrane-spanning stretches (helical) occupy residues 158–178 (IVNTFVIFISRLIAQVVSGFL) and 193–213 (MVYFAVATVLELVFGILASII). Glutamate 222 lines the Zn(2+) pocket.

It belongs to the peptidase M48B family. Zn(2+) serves as cofactor.

It is found in the cell inner membrane. This chain is Protease HtpX, found in Pectobacterium atrosepticum (strain SCRI 1043 / ATCC BAA-672) (Erwinia carotovora subsp. atroseptica).